The sequence spans 3051 residues: Biorientation of chromosomes in cell division protein 1-like 1 (3051 aa).

The segment covering 1–33 has biased composition (pro residues); sequence MATNPQPQPPPPAPPPPPPQPQPQPPPPPPGPG. Disordered stretches follow at residues 1–47, 164–197, 215–288, 301–393, and 411–469; these read MATN…AGAG, HKEEGSGNTAPDDEKPDTSLITQGVPTPGPSANV, ASAA…CPVE, ILLN…KEDF, and VHTS…VRHA. A compositionally biased stretch (gly residues) spans 34 to 47; the sequence is AGPGAGGAGGAGAG. A compositionally biased stretch (low complexity) spans 215 to 227; sequence ASAARASTETSNA. Positions 246–263 are enriched in basic and acidic residues; sequence STDKERTSEDMADKEKST. Ser266 carries the post-translational modification Phosphoserine. Residues 312 to 393 are compositionally biased toward basic and acidic residues; it reads SEQKNKSTDK…KTVEGTKEDF (82 aa). Acidic residues predominate over residues 418–443; the sequence is SFEEDTEEEVVTSDSMEEGEITSDDE. Position 473 is an N6-acetyllysine (Lys473). Ser482 and Ser484 each carry phosphoserine. 3 stretches are compositionally biased toward basic and acidic residues: residues 497–527, 549–570, and 580–653; these read IAKEKEERLLRRQINREKLEEKRKQKAEKTK, LEPKAARIKEVLKERKVLEKKV, and SRNV…LERE. Residues 497 to 1203 are disordered; that stretch reads IAKEKEERLL…EKHADHRSTL (707 aa). A phosphoserine mark is found at Ser635 and Ser659. Residues Thr660 and Thr733 each carry the phosphothreonine modification. Basic and acidic residues-rich tracts occupy residues 671 to 772, 804 to 852, 866 to 878, 940 to 966, 984 to 1021, and 1028 to 1075; these read TDTR…EENI, KDGK…KIQK, RRSESYSEDKCDM, KPDKEKNTEENDSEKQRKSKVEDKPFE, TQKDSSHRAKLPLAKEKYKSDKDSTSTRLERKLSDGHK, and SSKD…ENRR. Position 1077 is a phosphoserine (Ser1077). Composition is skewed to polar residues over residues 1092–1103 and 1135–1148; these read NTLSTPSGSSLQ and SKTQDNRNNNSQQD. Residues Ser1145 and Ser1318 each carry the phosphoserine modification. Phosphothreonine is present on Thr1354. 3 disordered regions span residues 1456–1550, 1700–1725, and 1760–1890; these read KLKH…QSEV, GSISSEEVDGSQGNMMRMGPKKETEG, and VVLG…TGLG. Positions 1465–1479 are enriched in basic and acidic residues; it reads KVKDISIDVERRNEN. Positions 1482-1504 are enriched in polar residues; sequence VDTSAGSGSAPSVLHQRNGQTED. A phosphoserine mark is found at Ser1531, Ser1701, and Ser1710. 4 positions are modified to phosphoserine: Ser2013, Ser2025, Ser2128, and Ser2203. Disordered regions lie at residues 2189–2210, 2258–2285, 2403–2447, 2472–2519, 2615–2635, and 2717–3051; these read DFEGPMPSAPPEAESPLASTSK, TSSVEDCEGPVSSAVPQEEGDPSVTPAE, STEE…FAGR, EDKS…AKDP, DQASAEKTGDDNSTRKSFPEE, and VENS…KAKR. Low complexity predominate over residues 2191-2207; it reads EGPMPSAPPEAESPLAS. A compositionally biased stretch (basic and acidic residues) spans 2428-2439; the sequence is AEKEEKHGKECP. Ser2475 carries the post-translational modification Phosphoserine. A compositionally biased stretch (low complexity) spans 2483–2492; that stretch reads GSSTASYSAG. Phosphoserine occurs at positions 2501 and 2618. 3 stretches are compositionally biased toward basic and acidic residues: residues 2621-2633, 2724-2746, and 2754-2767; these read KTGDDNSTRKSFP, TNEEIHSESYNKGEISSGRKDNA, and VEADPKEVEEEERH. Residues 2780-2789 are compositionally biased toward acidic residues; the sequence is SEDEPDDNPD. The span at 2791-2822 shows a compositional bias: basic and acidic residues; sequence LDSRIETAQRQCPETEPHDTKEENSRDLEELP. Positions 2823-2834 are enriched in polar residues; sequence KTSSETNSTTSR. Positions 2848–2864 are enriched in basic and acidic residues; that stretch reads TGEKPEQNDDDTIKSQE. Positions 2871–2880 are enriched in basic residues; sequence IKRKRGRPRK. Positions 2872-2884 form a DNA-binding region, a.T hook; sequence KRKRGRPRKYPVE. Positions 2896-2910 are enriched in polar residues; the sequence is DTGIVTVEQSPSSSK. Residues Ser2905 and Ser2907 each carry the phosphoserine modification. Residues 2944 to 2953 show a composition bias toward basic residues; that stretch reads VRRRGRKPKR. Phosphoserine is present on Ser2954. Residue Thr2956 is modified to Phosphothreonine. Ser2958, Ser2964, and Ser2973 each carry phosphoserine. Residues Lys2981 and Lys2982 each participate in a glycyl lysine isopeptide (Lys-Gly) (interchain with G-Cter in ubiquitin) cross-link. Residues 2985-2998 show a composition bias toward acidic residues; the sequence is ESDEEEEEEEEDEP. A phosphoserine mark is found at Ser2986 and Ser3019. Positions 3000 to 3020 are enriched in polar residues; that stretch reads GATTRSTTRSEAQRSKTQLSP. Basic and acidic residues predominate over residues 3039-3051; sequence QRVEEAPVKKAKR.

Belongs to the BOD1 family. In terms of assembly, interacts (via COMPASS-Shg1 domain) with SETD1A at stalled replication forks; this interaction mediates FANCD2-dependent nucleosome remodeling at reversed forks protecting them from nucleolytic degradation.

Its subcellular location is the chromosome. Its function is as follows. Component of the fork protection machinery required to protect stalled/damaged replication forks from uncontrolled DNA2-dependent resection. Acts by stabilizing RAD51 at stalled replication forks and protecting RAD51 nucleofilaments from the antirecombinogenic activities of FBH1 and BLM. Does not regulate spindle orientation. The chain is Biorientation of chromosomes in cell division protein 1-like 1 from Homo sapiens (Human).